The primary structure comprises 241 residues: Chlorophyll a-b binding protein 6, chloroplastic (241 aa).

Residues 1–35 (MASNSLMSCGIAAVYPSLLSSSKSKFVSAGVPLPN) constitute a chloroplast transit peptide. A chlorophyll b-binding site is contributed by Trp48. Residues Phe68, Glu87, and His90 each coordinate chlorophyll a. Arg92 contributes to the chlorophyll b binding site. The helical transmembrane segment at 93 to 113 (WAMLAVPGILVPEALGYGNWV) threads the bilayer. Leu129 contributes to the chlorophyll a binding site. A helical transmembrane segment spans residues 132–152 (PVPWGTLPTILAIEFLAIAFV). 3 residues coordinate chlorophyll b: Val133, Glu153, and Arg156. Positions 190, 191, 194, 196, 208, and 224 each coordinate chlorophyll a. Residues 197 to 217 (LALLAFVGFCVQQSAYPGTGP) form a helical membrane-spanning segment.

It belongs to the light-harvesting chlorophyll a/b-binding (LHC) protein family. In terms of assembly, the LHC complex consists of chlorophyll a-b binding proteins. Red-emitting heterodimer with LHCA4. Interacts with LHCA5. The cofactor is Binds at least 14 chlorophylls (8 Chl-a and 6 Chl-b) and carotenoids such as lutein and neoxanthin.. In terms of processing, photoregulated by reversible phosphorylation of its threonine residues.

It is found in the plastid. It localises to the chloroplast thylakoid membrane. In terms of biological role, the light-harvesting complex (LHC) functions as a light receptor, it captures and delivers excitation energy to photosystems with which it is closely associated. The sequence is that of Chlorophyll a-b binding protein 6, chloroplastic from Arabidopsis thaliana (Mouse-ear cress).